The chain runs to 183 residues: Alkyl hydroperoxide reductase AhpD (183 aa).

Cysteine 132 functions as the Proton donor in the catalytic mechanism. An intrachain disulfide couples cysteine 132 to cysteine 135. Cysteine 135 acts as the Cysteine sulfenic acid (-SOH) intermediate in catalysis.

It belongs to the AhpD family.

It catalyses the reaction N(6)-[(R)-dihydrolipoyl]-L-lysyl-[lipoyl-carrier protein] + a hydroperoxide = N(6)-[(R)-lipoyl]-L-lysyl-[lipoyl-carrier protein] + an alcohol + H2O. In terms of biological role, antioxidant protein with alkyl hydroperoxidase activity. Required for the reduction of the AhpC active site cysteine residues and for the regeneration of the AhpC enzyme activity. In Caulobacter vibrioides (strain ATCC 19089 / CIP 103742 / CB 15) (Caulobacter crescentus), this protein is Alkyl hydroperoxide reductase AhpD.